The primary structure comprises 136 residues: Large ribosomal subunit protein uL16 (136 aa).

Belongs to the universal ribosomal protein uL16 family. As to quaternary structure, part of the 50S ribosomal subunit.

Its function is as follows. Binds 23S rRNA and is also seen to make contacts with the A and possibly P site tRNAs. The polypeptide is Large ribosomal subunit protein uL16 (Vibrio atlanticus (strain LGP32) (Vibrio splendidus (strain Mel32))).